An 89-amino-acid polypeptide reads, in one-letter code: Small ribosomal subunit protein uS14B (89 aa).

The interval 38–61 (KLPKDAHPSRLKLRDQTDGRPRGY) is disordered. The span at 39-58 (LPKDAHPSRLKLRDQTDGRP) shows a compositional bias: basic and acidic residues.

The protein belongs to the universal ribosomal protein uS14 family. Part of the 30S ribosomal subunit. Contacts proteins S3 and S10.

In terms of biological role, binds 16S rRNA, required for the assembly of 30S particles and may also be responsible for determining the conformation of the 16S rRNA at the A site. This Enterococcus faecalis (strain ATCC 700802 / V583) protein is Small ribosomal subunit protein uS14B.